The sequence spans 370 residues: Subtilisin-like protease (370 aa).

A signal peptide spans 1-17 (MIASIVFFIVLVDGVAT). Residues D13, H35, and S190 each act as charge relay system in the active site. The region spanning 18–261 (GSPNALVTDF…FGEVSPSRLE (244 aa)) is the Peptidase S8 domain. Residues 240 to 370 (RVTDRWTHRN…TTEGTCHGIR (131 aa)) form the P/Homo B domain.

This sequence belongs to the peptidase S8 family.

The chain is Subtilisin-like protease (ORF47) from Ictalurid herpesvirus 1 (strain Auburn) (IcHV-1).